We begin with the raw amino-acid sequence, 71 residues long: Phosphatidylinositol N-acetylglucosaminyltransferase subunit Y (71 aa).

Topologically, residues 1-3 (MFL) are cytoplasmic. The chain crosses the membrane as a helical span at residues 4-26 (SLPMLTVLIPLVSLAGLFYSASV). At 27–44 (EDDFPQGCTSTTSLCFYS) the chain is on the lumenal side. The helical transmembrane segment at 45–65 (LLLPITIPVYVFFHLWTWMGI) threads the bilayer. Over 66–71 (KLFRHN) the chain is Cytoplasmic.

Component of the glycosylphosphatidylinositol-N-acetylglucosaminyltransferase (GPI-GnT) complex composed at least by PIGA, PIGC, PIGH, PIGP, PIGQ, PIGY and DPM2. Interacts directly with PIGA; this interaction regulates glycosylphosphatidylinositol-N-acetylglucosaminyltransferase activity. Does not interact with Ras proteins.

The protein localises to the endoplasmic reticulum membrane. Its pathway is glycolipid biosynthesis; glycosylphosphatidylinositol-anchor biosynthesis. In terms of biological role, part of the glycosylphosphatidylinositol-N-acetylglucosaminyltransferase (GPI-GnT) complex that catalyzes the transfer of N-acetylglucosamine from UDP-N-acetylglucosamine to phosphatidylinositol and participates in the first step of GPI biosynthesis. May act by regulating the catalytic subunit PIGA. This Bos taurus (Bovine) protein is Phosphatidylinositol N-acetylglucosaminyltransferase subunit Y.